The chain runs to 358 residues: Ion-translocating oxidoreductase complex subunit D (358 aa).

The next 4 membrane-spanning stretches (helical) occupy residues isoleucine 19–glycine 39, glycine 41–isoleucine 61, leucine 79–isoleucine 99, and isoleucine 125–isoleucine 145. FMN phosphoryl threonine is present on threonine 186. The next 5 membrane-spanning stretches (helical) occupy residues phenylalanine 220–leucine 240, isoleucine 248–phenylalanine 268, leucine 271–threonine 291, serine 297–isoleucine 317, and glycine 321–isoleucine 341.

The protein belongs to the NqrB/RnfD family. In terms of assembly, the complex is composed of six subunits: RnfA, RnfB, RnfC, RnfD, RnfE and RnfG. The cofactor is FMN.

It is found in the cell inner membrane. Functionally, part of a membrane-bound complex that couples electron transfer with translocation of ions across the membrane. This Haemophilus influenzae (strain PittEE) protein is Ion-translocating oxidoreductase complex subunit D.